The primary structure comprises 65 residues: Alpha-toxin BeM10 (65 aa).

The LCN-type CS-alpha/beta domain maps to 2–65 (RDGYIADDKD…IKQKVSGKCN (64 aa)). Cystine bridges form between Cys-12-Cys-64, Cys-16-Cys-35, Cys-22-Cys-45, and Cys-26-Cys-47.

This sequence belongs to the long (4 C-C) scorpion toxin superfamily. Sodium channel inhibitor family. Alpha subfamily. Expressed by the venom gland.

The protein resides in the secreted. Functionally, alpha toxins bind voltage-independently at site-3 of sodium channels (Nav) and inhibit the inactivation of the activated channels, thereby blocking neuronal transmission. Has paralytic activity in mice. The chain is Alpha-toxin BeM10 from Mesobuthus eupeus (Lesser Asian scorpion).